The sequence spans 606 residues: NADH-ubiquinone oxidoreductase chain 5 (606 aa).

16 helical membrane passes run 1 to 21, 43 to 63, 87 to 107, 112 to 132, 137 to 157, 171 to 191, 213 to 233, 241 to 261, 273 to 293, 301 to 321, 324 to 344, 366 to 386, 407 to 429, 457 to 477, 482 to 502, and 582 to 602; these read MNPF…PIMM, AFTL…EMII, VMFI…SMWY, PFIN…MILV, LFQL…LIGW, AILY…WFLT, LIGL…HPWL, TPVS…FLLI, VQTM…LCAI, IVAF…GINQ, LAFL…MCSG, MPFT…MPYL, WALL…IIFF, LLIG…PMTV, MPLY…MLAL, and GLIK…MTLF.

It belongs to the complex I subunit 5 family. As to quaternary structure, core subunit of respiratory chain NADH dehydrogenase (Complex I) which is composed of 45 different subunits.

The protein resides in the mitochondrion inner membrane. The enzyme catalyses a ubiquinone + NADH + 5 H(+)(in) = a ubiquinol + NAD(+) + 4 H(+)(out). Core subunit of the mitochondrial membrane respiratory chain NADH dehydrogenase (Complex I) which catalyzes electron transfer from NADH through the respiratory chain, using ubiquinone as an electron acceptor. Essential for the catalytic activity and assembly of complex I. The polypeptide is NADH-ubiquinone oxidoreductase chain 5 (MT-ND5) (Sus scrofa (Pig)).